A 631-amino-acid polypeptide reads, in one-letter code: Tumor protein p73 (631 aa).

Residues 1–43 (MAQTSSSSSSTFEHLWSSLEPDSTYFDLPQPSQGTSEASGSEE) are transactivation. Disordered regions lie at residues 23–43 (STYF…GSEE) and 69–113 (SRAA…NTDY). Thr24 bears the Phosphothreonine; by PLK1 mark. Tyr25 carries the phosphotyrosine; by SRC and HCK modification. 2 stretches are compositionally biased toward polar residues: residues 30–43 (QPSQ…GSEE) and 86–100 (PTHS…TFDT). Tyr91 is subject to Phosphotyrosine; by ABL1. The segment at 123–302 (FQQSSTAKSA…DRKADEDHYR (180 aa)) is DNA-binding. Zn(2+)-binding residues include Cys186, His189, Cys250, and Cys254. Residues 306 to 315 (ALNESTTKNG) are compositionally biased toward polar residues. The tract at residues 306–334 (ALNESTTKNGAASKRAFKQSPPAIPALGT) is disordered. Residues 337-372 (KKRRHGDEDMFYMHVRGRENFEILMKVKESLELMEL) form an interaction with HIPK2 region. An oligomerization region spans residues 337–378 (KKRRHGDEDMFYMHVRGRENFEILMKVKESLELMELVPQPLV). The short motif at 477–481 (PPPPY) is the PPxY motif element. In terms of domain architecture, SAM spans 479–545 (PPYHADPSLV…WRGLQDLKQS (67 aa)). Lys622 is covalently cross-linked (Glycyl lysine isopeptide (Lys-Gly) (interchain with G-Cter in SUMO); alternate). A Glycyl lysine isopeptide (Lys-Gly) (interchain with G-Cter in SUMO2); alternate cross-link involves residue Lys622.

The protein belongs to the p53 family. Found in a complex with p53/TP53 and CABLES1. The C-terminal oligomerization domain binds to the ABL1 tyrosine kinase SH3 domain. Interacts with HECW2, HIPK2, RANBP9 and WWOX. Interacts (via SAM domain) with FBXO45 (via B30.2/SPRY domain). Interacts with YAP1 (phosphorylated form). Interacts with HCK (via SH3 domain); this inhibits TP73 activity and degradation. Interacts (via SAM domain) with NQO1; this interaction is NADH-dependent, stabilizes TP73 in response to oxidative stress and protects it from ubiquitin-independent degradation by the 20S proteasome. Zn(2+) serves as cofactor. Sumoylated on Lys-622, which potentiates proteasomal degradation but does not affect transcriptional activity. Post-translationally, phosphorylation by PLK1 and PLK3 inhibits the transcription regulator activity and pro-apoptotic function. Higher levels of phosphorylation seen in striatal neurons of. mutant huntingtin (htt) transgenic mice. In terms of processing, polyubiquitinated by RCHY1/PIRH2; leading to its degradation by the proteasome. As to expression, found in striatal neurons of mutant huntingtin (htt) transgenic mice (at protein level). Isoform 1 is expressed in the nasal epithelium, the vomeronasal organ, the hippocampus and the hypothalamus.

It localises to the nucleus. The protein resides in the cytoplasm. Participates in the apoptotic response to DNA damage. Isoforms containing the transactivation domain are pro-apoptotic, isoforms lacking the domain are anti-apoptotic and block the function of p53 and transactivating p73 isoforms. May be a tumor suppressor protein. Is an activator of FOXJ1 expression, essential for the positive regulation of lung ciliated cell differentiation. This Mus musculus (Mouse) protein is Tumor protein p73 (Tp73).